The chain runs to 144 residues: Large ribosomal subunit protein uL15 (144 aa).

Residues 1-10 are compositionally biased toward basic and acidic residues; that stretch reads MKLHELKPAE. Residues 1 to 52 are disordered; the sequence is MKLHELKPAEGSRQVRNRVGRGTSSGNGKTAGRGQKGQKARGKVRLGFEGGQ. The span at 23–35 shows a compositional bias: gly residues; it reads TSSGNGKTAGRGQ.

Belongs to the universal ribosomal protein uL15 family. Part of the 50S ribosomal subunit.

Its function is as follows. Binds to the 23S rRNA. The protein is Large ribosomal subunit protein uL15 of Ligilactobacillus salivarius (strain UCC118) (Lactobacillus salivarius).